The primary structure comprises 82 residues: Putative defensin-like protein 70 (82 aa).

An N-terminal signal peptide occupies residues 1-27 (MKMESSKMLVVFTLMVLIAVSSDLVSG). Intrachain disulfides connect Cys39–Cys80, Cys43–Cys66, Cys52–Cys78, and Cys56–Cys79.

Belongs to the DEFL family.

Its subcellular location is the secreted. The sequence is that of Putative defensin-like protein 70 (LCR83) from Arabidopsis thaliana (Mouse-ear cress).